Here is a 265-residue protein sequence, read N- to C-terminus: Ribosomal RNA small subunit methyltransferase A (265 aa).

S-adenosyl-L-methionine-binding residues include asparagine 13, leucine 15, glycine 40, glutamate 61, aspartate 85, and asparagine 103.

Belongs to the class I-like SAM-binding methyltransferase superfamily. rRNA adenine N(6)-methyltransferase family. RsmA subfamily.

The protein resides in the cytoplasm. It carries out the reaction adenosine(1518)/adenosine(1519) in 16S rRNA + 4 S-adenosyl-L-methionine = N(6)-dimethyladenosine(1518)/N(6)-dimethyladenosine(1519) in 16S rRNA + 4 S-adenosyl-L-homocysteine + 4 H(+). Functionally, specifically dimethylates two adjacent adenosines (A1518 and A1519) in the loop of a conserved hairpin near the 3'-end of 16S rRNA in the 30S particle. May play a critical role in biogenesis of 30S subunits. This is Ribosomal RNA small subunit methyltransferase A from Aromatoleum aromaticum (strain DSM 19018 / LMG 30748 / EbN1) (Azoarcus sp. (strain EbN1)).